The following is a 267-amino-acid chain: MSYFEAFILALIQGLTEFLPISSSAHLILPSAILGWEDQGLAFDVAVHVGTLMAVVIYFRQEVITLFQALFASIFKGDRSKEAKLAWMIVIATIPACVFGLLMKDIIEVYLRSAYVIATTTIIFGLLLWWVDRNAELVADEYQTGWKKALFIGIAQALAMIPGTSRSGATITAALYLGFTREAAARFSFLMSIPIITLAGGYLGMKLVTSGEPVHIGFLLTGIVTSFISAYICIHFFLKMISRMGMTPFVIYRLILGFGLFAFLLMA.

8 helical membrane passes run 1 to 21, 39 to 59, 83 to 103, 111 to 131, 144 to 164, 189 to 209, 218 to 238, and 246 to 266; these read MSYF…FLPI, QGLA…VIYF, AKLA…GLLM, LRSA…LWWV, TGWK…IPGT, FLMS…KLVT, FLLT…HFFL, and MTPF…FLLM.

It belongs to the UppP family.

The protein resides in the cell inner membrane. It catalyses the reaction di-trans,octa-cis-undecaprenyl diphosphate + H2O = di-trans,octa-cis-undecaprenyl phosphate + phosphate + H(+). Catalyzes the dephosphorylation of undecaprenyl diphosphate (UPP). Confers resistance to bacitracin. The sequence is that of Undecaprenyl-diphosphatase from Vibrio campbellii (strain ATCC BAA-1116).